We begin with the raw amino-acid sequence, 332 residues long: Large ribosomal subunit protein mL44 (332 aa).

Residues 1–30 (MASGLTRLLLRGPRCLLATAGLTLIPPVRG) constitute a mitochondrion transit peptide. The region spanning 86 to 228 (DLLKTAFVNS…LITQMTGKEL (143 aa)) is the RNase III domain. The DRBM domain maps to 236–306 (NPMGLLVQEL…ARVALRKLYG (71 aa)).

This sequence belongs to the ribonuclease III family. Mitochondrion-specific ribosomal protein mL44 subfamily. As to quaternary structure, component of the mitochondrial ribosome large subunit (39S) which comprises a 16S rRNA and about 50 distinct proteins.

The protein localises to the mitochondrion. Its function is as follows. Component of the 39S subunit of mitochondrial ribosome. May have a function in the assembly/stability of nascent mitochondrial polypeptides exiting the ribosome. In Bos taurus (Bovine), this protein is Large ribosomal subunit protein mL44 (MRPL44).